The following is a 380-amino-acid chain: Alcohol dehydrogenase 1 (380 aa).

Cys-48, Thr-50, His-70, Cys-100, Cys-103, Cys-106, Cys-114, and Cys-178 together coordinate Zn(2+). Thr-50 and His-70 together coordinate an alcohol. Residue Thr-50 coordinates NAD(+). Residues 203-208 (GLGAVG), Asp-227, Arg-232, Thr-273, Val-296, 296-298 (VGV), and Arg-373 each bind NAD(+).

It belongs to the zinc-containing alcohol dehydrogenase family. Homodimer. The cofactor is Zn(2+).

It is found in the cytoplasm. The catalysed reaction is a primary alcohol + NAD(+) = an aldehyde + NADH + H(+). It catalyses the reaction a secondary alcohol + NAD(+) = a ketone + NADH + H(+). The chain is Alcohol dehydrogenase 1 (ADH1) from Trifolium repens (Creeping white clover).